A 314-amino-acid polypeptide reads, in one-letter code: MQKSTSKYVIDPISIKTNCSSEESYIRCVEYGKGKAHYRNLILLAKAILAGVFVGVCAHASGIAGGLFYYHKLREYVGISMSAFVYGFTFPIAFLCIICTGSDLFTGNTLAVTTALLQKKLGLLCYMRVMCISLVGNYIGAVAFAFFVSYGSGAFSINTDTSKNHIFQFLNDIAIKKVSHSFIECICLAIGCNIFVCLAVYFVLSIKDGSGLVFSVFFAVYAFAIAGYEHIIANIYTLNLALMISNDISFTQVYFKNLLPTLIGNYIAGGLVLAFPLFFIYRSCYYDYDKMNDELNTVVLKTLSLELQNESNHI.

At 1–47 (MQKSTSKYVIDPISIKTNCSSEESYIRCVEYGKGKAHYRNLILLAKA) the chain is on the cytoplasmic side. Residues 48-68 (ILAGVFVGVCAHASGIAGGLF) form a helical membrane-spanning segment. The Extracellular portion of the chain corresponds to 69–77 (YYHKLREYV). A helical membrane pass occupies residues 78–98 (GISMSAFVYGFTFPIAFLCII). Topologically, residues 99-128 (CTGSDLFTGNTLAVTTALLQKKLGLLCYMR) are cytoplasmic. A helical transmembrane segment spans residues 129–149 (VMCISLVGNYIGAVAFAFFVS). Residues 150-185 (YGSGAFSINTDTSKNHIFQFLNDIAIKKVSHSFIEC) are Extracellular-facing. Residues 186-206 (ICLAIGCNIFVCLAVYFVLSI) traverse the membrane as a helical segment. At 207–211 (KDGSG) the chain is on the cytoplasmic side. Residues 212–232 (LVFSVFFAVYAFAIAGYEHII) traverse the membrane as a helical segment. The Extracellular portion of the chain corresponds to 233–260 (ANIYTLNLALMISNDISFTQVYFKNLLP). Residues 261–281 (TLIGNYIAGGLVLAFPLFFIY) traverse the membrane as a helical segment. The Cytoplasmic portion of the chain corresponds to 282-314 (RSCYYDYDKMNDELNTVVLKTLSLELQNESNHI).

Belongs to the FNT transporter (TC 1.A.16) family. In terms of assembly, homopentamer.

The protein localises to the cell membrane. It is found in the vacuole membrane. It catalyses the reaction (S)-lactate(in) + H(+)(in) = (S)-lactate(out) + H(+)(out). The catalysed reaction is formate(in) + H(+)(in) = formate(out) + H(+)(out). The enzyme catalyses pyruvate(out) + H(+)(out) = pyruvate(in) + H(+)(in). It carries out the reaction acetate(out) + H(+)(out) = acetate(in) + H(+)(in). Inhibited by the Malaria Box compound MMV007839 and its derivatives BH296 and BH267.meta. Its function is as follows. Monocarboxylate-proton symporter that mediates the efflux of the waste product lactate in the intraerythrocytic parasites; active in acidic-to-neutral pH range. Transports L-lactate. This chain is Formate-nitrite transporter, found in Plasmodium malariae.